The sequence spans 351 residues: Ferrochelatase (351 aa).

Residues His-184 and Glu-265 each coordinate Fe cation.

This sequence belongs to the ferrochelatase family.

It localises to the cytoplasm. The enzyme catalyses heme b + 2 H(+) = protoporphyrin IX + Fe(2+). It functions in the pathway porphyrin-containing compound metabolism; protoheme biosynthesis; protoheme from protoporphyrin-IX: step 1/1. In terms of biological role, catalyzes the ferrous insertion into protoporphyrin IX. In Rhodopirellula baltica (strain DSM 10527 / NCIMB 13988 / SH1), this protein is Ferrochelatase.